Consider the following 253-residue polypeptide: Cell division protein ZapD (253 aa).

Belongs to the ZapD family. Interacts with FtsZ.

It localises to the cytoplasm. In terms of biological role, cell division factor that enhances FtsZ-ring assembly. Directly interacts with FtsZ and promotes bundling of FtsZ protofilaments, with a reduction in FtsZ GTPase activity. The polypeptide is Cell division protein ZapD (Bordetella bronchiseptica (strain ATCC BAA-588 / NCTC 13252 / RB50) (Alcaligenes bronchisepticus)).